The sequence spans 517 residues: Amidophosphoribosyltransferase (517 aa).

Residue methionine 1 is modified to N-acetylmethionine. A propeptide spanning residues 1–11 (MELEELGIREE) is cleaved from the precursor. The Nucleophile role is filled by cysteine 12. One can recognise a Glutamine amidotransferase type-2 domain in the interval 12–261 (CGVFGCIASG…PGEIVEISRH (250 aa)). Residue cysteine 280 participates in [4Fe-4S] cluster binding. 3 residues coordinate Mg(2+): serine 327, aspartate 389, and aspartate 390. [4Fe-4S] cluster is bound by residues cysteine 426, cysteine 503, and cysteine 506.

This sequence in the C-terminal section; belongs to the purine/pyrimidine phosphoribosyltransferase family. As to quaternary structure, homotetramer. It depends on Mg(2+) as a cofactor. The cofactor is [4Fe-4S] cluster. As to expression, ubiquitously expressed.

The enzyme catalyses 5-phospho-beta-D-ribosylamine + L-glutamate + diphosphate = 5-phospho-alpha-D-ribose 1-diphosphate + L-glutamine + H2O. It functions in the pathway purine metabolism; IMP biosynthesis via de novo pathway; N(1)-(5-phospho-D-ribosyl)glycinamide from 5-phospho-alpha-D-ribose 1-diphosphate: step 1/2. Catalyzes the formation of phosphoribosylamine from phosphoribosylpyrophosphate (PRPP) and glutamine. The polypeptide is Amidophosphoribosyltransferase (PPAT) (Homo sapiens (Human)).